We begin with the raw amino-acid sequence, 627 residues long: Sphingomyelin phosphodiesterase (627 aa).

Residues 1 to 44 form the signal peptide; it reads MPHHRASSGQDHLRAGWEQRLERSLPAPRVGLLWMGLGLALVLA. The Saposin B-type domain occupies 83 to 167; the sequence is QNLTCPACKV…LLGSSCGHWD (85 aa). The N-linked (GlcNAc...) asparagine glycan is linked to asparagine 84. Intrachain disulfides connect cysteine 87-cysteine 163, cysteine 90-cysteine 155, and cysteine 118-cysteine 129. N-linked (GlcNAc...) asparagine glycosylation is present at asparagine 173. Residues aspartate 204 and histidine 206 each coordinate Zn(2+). Intrachain disulfides connect cysteine 219/cysteine 224 and cysteine 225/cysteine 248. Positions 276 and 316 each coordinate Zn(2+). Asparagine 333 and asparagine 393 each carry an N-linked (GlcNAc...) asparagine glycan. Cysteine 383 and cysteine 429 form a disulfide bridge. Zn(2+)-binding residues include histidine 423, histidine 455, and histidine 457. Residue serine 506 is modified to Phosphoserine. The N-linked (GlcNAc...) asparagine glycan is linked to asparagine 518. Intrachain disulfides connect cysteine 582–cysteine 586 and cysteine 592–cysteine 605. Residue asparagine 611 is glycosylated (N-linked (GlcNAc...) asparagine).

This sequence belongs to the acid sphingomyelinase family. Monomer. Interacts with SORT1; the interaction is required for SMPD1 targeting to lysosomes. Zn(2+) serves as cofactor. Post-translationally, proteolytically processed. Mature lysosomal form arises from C-terminal proteolytic processing of pro-sphingomyelin phosphodiesterase. Both lysosomal and secreted forms are glycosylated but they show a differential pattern of glycosylation. In terms of processing, phosphorylated at Ser-506 by PRKCD upon stress stimuli. Phosphorylation is required for secretion. Post-translationally, this form is generated following cleavage by CASP7 in the extracellular milieu. It shows increased activity.

Its subcellular location is the lysosome. It is found in the lipid droplet. It localises to the secreted. The protein localises to the extracellular space. It carries out the reaction a sphingomyelin + H2O = phosphocholine + an N-acylsphing-4-enine + H(+). The enzyme catalyses N-(octadecanoyl)-sphing-4-enine-1-phosphocholine + H2O = N-octadecanoylsphing-4-enine + phosphocholine + H(+). It catalyses the reaction a 1,2-diacyl-sn-glycero-3-phosphocholine + H2O = phosphocholine + a 1,2-diacyl-sn-glycerol + H(+). The catalysed reaction is 1,2-dihexadecanoyl-sn-glycero-3-phosphocholine + H2O = 1,2-dihexadecanoyl-sn-glycerol + phosphocholine + H(+). Its activity is regulated as follows. Hydrolysis of liposomal sphingomyelin is stimulated by incorporation of diacylglycerol (DAG), ceramide and free fatty acids into the liposomal membranes. Phosphatidylcholine hydrolysis is inhibited by incorporation of cholesterol, ceramide, DAG, monoacylglycerol and fatty acids. Its function is as follows. Converts sphingomyelin to ceramide. Exists as two enzymatic forms that arise from alternative trafficking of a single protein precursor, one that is targeted to the endolysosomal compartment, whereas the other is released extracellularly. However, in response to various forms of stress, lysosomal exocytosis may represent a major source of the secretory form. In the lysosomes, converts sphingomyelin to ceramide. Plays an important role in the export of cholesterol from the intraendolysosomal membranes. Also has phospholipase C activities toward 1,2-diacylglycerolphosphocholine and 1,2-diacylglycerolphosphoglycerol. Modulates stress-induced apoptosis through the production of ceramide. Functionally, when secreted, modulates cell signaling with its ability to reorganize the plasma membrane by converting sphingomyelin to ceramide. Secreted form is increased in response to stress and inflammatory mediators such as IL1B, IFNG or TNF as well as upon infection with bacteria and viruses. Produces the release of ceramide in the outer leaflet of the plasma membrane playing a central role in host defense. Ceramide reorganizes these rafts into larger signaling platforms that are required to internalize P.aeruginosa, induce apoptosis and regulate the cytokine response in infected cells. In wounded cells, the lysosomal form is released extracellularly in the presence of Ca(2+) and promotes endocytosis and plasma membrane repair. In terms of biological role, this form is generated following cleavage by CASP7 in the extracellular milieu in response to bacterial infection. It shows increased ability to convert sphingomyelin to ceramide and promotes plasma membrane repair. Plasma membrane repair by ceramide counteracts the action of gasdermin-D (GSDMD) perforin (PRF1) pores that are formed in response to bacterial infection. Its function is as follows. (Microbial infection) Secretion is activated by bacteria such as P.aeruginosa, this activation results in the release of ceramide in the outer leaflet of the plasma membrane which facilitates the infection. The protein is Sphingomyelin phosphodiesterase of Mus musculus (Mouse).